We begin with the raw amino-acid sequence, 347 residues long: MTAPSQVLKIRRPDDWHVHLRDGDMLKTVVPYTSEIYGRAIVMPNLAPPVTTVDAAIAYRQRILDAVPAGHDFTPLMTCYLTDTLDPDELERGFREGVFTAAKLYPANATTNSSHGVTSVDTIMPVLERMEKLGMPLLVHGEVTHADIDIFDREARFIETVMEPLRQRLTALKVVFEHITTKDAAEYVRDGNELLAATITPQHLMFNRNHMLVGGIRPHLYCLPILKRNVHQQALRELVASGFSRAFLGTDSAPHARHRKETSCGCAGCFNAPTALGSYATVFEEMNALAHFEAFCSLNGPRFYGLSVNETYVELVREEQLVPESITLADDSLVPFLGGERVRWSVK.

Residues histidine 17 and histidine 19 each coordinate Zn(2+). Residues 19–21 (HLR) and asparagine 45 each bind substrate. Residues lysine 103, histidine 140, and histidine 178 each contribute to the Zn(2+) site. An N6-carboxylysine modification is found at lysine 103. A substrate-binding site is contributed by histidine 140. Substrate is bound at residue leucine 223. Position 251 (aspartate 251) interacts with Zn(2+). The active site involves aspartate 251. 2 residues coordinate substrate: histidine 255 and alanine 267.

It belongs to the metallo-dependent hydrolases superfamily. DHOase family. Class II DHOase subfamily. In terms of assembly, homodimer. Requires Zn(2+) as cofactor.

It carries out the reaction (S)-dihydroorotate + H2O = N-carbamoyl-L-aspartate + H(+). The protein operates within pyrimidine metabolism; UMP biosynthesis via de novo pathway; (S)-dihydroorotate from bicarbonate: step 3/3. Its function is as follows. Catalyzes the reversible cyclization of carbamoyl aspartate to dihydroorotate. This Citrobacter koseri (strain ATCC BAA-895 / CDC 4225-83 / SGSC4696) protein is Dihydroorotase.